The chain runs to 100 residues: Urease subunit gamma (100 aa).

Belongs to the urease gamma subunit family. Heterotrimer of UreA (gamma), UreB (beta) and UreC (alpha) subunits. Three heterotrimers associate to form the active enzyme.

It is found in the cytoplasm. It carries out the reaction urea + 2 H2O + H(+) = hydrogencarbonate + 2 NH4(+). Its pathway is nitrogen metabolism; urea degradation; CO(2) and NH(3) from urea (urease route): step 1/1. This Prochlorococcus marinus (strain MIT 9301) protein is Urease subunit gamma.